A 1270-amino-acid polypeptide reads, in one-letter code: ATP-dependent helicase/nuclease subunit A (1270 aa).

In terms of domain architecture, UvrD-like helicase ATP-binding spans 3–476 (TKWTEEQELA…IMLYKNFRSR (474 aa)). An ATP-binding site is contributed by 24 to 31 (AAAGSGKT). A UvrD-like helicase C-terminal domain is found at 528 to 823 (IENLKVAGDI…RIMSIHKSKG (296 aa)).

It belongs to the helicase family. AddA subfamily. In terms of assembly, heterodimer of AddA and AddB/RexB. Mg(2+) is required as a cofactor.

It carries out the reaction Couples ATP hydrolysis with the unwinding of duplex DNA by translocating in the 3'-5' direction.. The catalysed reaction is ATP + H2O = ADP + phosphate + H(+). Its function is as follows. The heterodimer acts as both an ATP-dependent DNA helicase and an ATP-dependent, dual-direction single-stranded exonuclease. Recognizes the chi site generating a DNA molecule suitable for the initiation of homologous recombination. The AddA nuclease domain is required for chi fragment generation; this subunit has the helicase and 3' -&gt; 5' nuclease activities. The protein is ATP-dependent helicase/nuclease subunit A of Clostridium perfringens (strain SM101 / Type A).